An 867-amino-acid chain; its full sequence is Protein melted homolog (867 aa).

Residues 480–505 are disordered; that stretch reads MPSSSRTNVHLSQAASSSRGHSLPQT. The PH domain maps to 753–860; it reads EKVLEGQLKE…WLHCLQIAMA (108 aa).

The protein belongs to the MELT/VEPH family.

The protein resides in the cell membrane. The sequence is that of Protein melted homolog from Caenorhabditis briggsae.